The primary structure comprises 653 residues: Bifunctional lysine-specific demethylase and histidyl-hydroxylase NO66 (653 aa).

Positions 1–12 (MKKATTSAAAKS) are enriched in low complexity. Disordered stretches follow at residues 1–50 (MKKA…DMLA) and 65–137 (FDDD…LERT). Residues 13 to 26 (QGNSKMQKNANNGT) show a composition bias toward polar residues. Residue Ser44 is modified to Phosphoserine. Low complexity predominate over residues 72–86 (STSKKTQSGSAAAAK). Position 131 is a phosphoserine (Ser131). Thr137 is modified (phosphothreonine). Residue Ser138 is modified to Phosphoserine. The interval 184 to 208 (AEPTEEGNNNNDEKETETIETHKAD) is disordered. Positions 194–208 (NDEKETETIETHKAD) are enriched in basic and acidic residues. The JmjC domain maps to 300-450 (FYSDGCSIRL…NLLETLMPMV (151 aa)). Fe cation is bound by residues His351, Asp353, and His416.

It belongs to the ROX family. NO66 subfamily. It depends on Fe(2+) as a cofactor.

It localises to the nucleus. It catalyses the reaction N(6),N(6)-dimethyl-L-lysyl(36)-[histone H3] + 2 2-oxoglutarate + 2 O2 = L-lysyl(36)-[histone H3] + 2 formaldehyde + 2 succinate + 2 CO2. Its function is as follows. Oxygenase that can act as both a histone lysine demethylase and a ribosomal histidine hydroxylase. Specifically demethylates 'Lys-4' (H3K4me) and 'Lys-36' (H3K36me) of histone H3, thereby playing a central role in histone code. In Drosophila melanogaster (Fruit fly), this protein is Bifunctional lysine-specific demethylase and histidyl-hydroxylase NO66.